The primary structure comprises 200 residues: Cytochrome c biogenesis ATP-binding export protein CcmA (200 aa).

Positions 3 to 199 constitute an ABC transporter domain; the sequence is LSGRRVICVR…DSRELRIGGV (197 aa). 35–42 provides a ligand contact to ATP; the sequence is GRNGSGKT.

Belongs to the ABC transporter superfamily. CcmA exporter (TC 3.A.1.107) family. In terms of assembly, the complex is composed of two ATP-binding proteins (CcmA) and two transmembrane proteins (CcmB).

The protein localises to the cell inner membrane. The catalysed reaction is heme b(in) + ATP + H2O = heme b(out) + ADP + phosphate + H(+). Part of the ABC transporter complex CcmAB involved in the biogenesis of c-type cytochromes; once thought to export heme, this seems not to be the case, but its exact role is uncertain. Responsible for energy coupling to the transport system. The polypeptide is Cytochrome c biogenesis ATP-binding export protein CcmA (Bradyrhizobium diazoefficiens (strain JCM 10833 / BCRC 13528 / IAM 13628 / NBRC 14792 / USDA 110)).